We begin with the raw amino-acid sequence, 427 residues long: Glutamate-1-semialdehyde 2,1-aminomutase (427 aa).

Residue K265 is modified to N6-(pyridoxal phosphate)lysine.

The protein belongs to the class-III pyridoxal-phosphate-dependent aminotransferase family. HemL subfamily. As to quaternary structure, homodimer. The cofactor is pyridoxal 5'-phosphate.

Its subcellular location is the cytoplasm. The enzyme catalyses (S)-4-amino-5-oxopentanoate = 5-aminolevulinate. It participates in porphyrin-containing compound metabolism; protoporphyrin-IX biosynthesis; 5-aminolevulinate from L-glutamyl-tRNA(Glu): step 2/2. The polypeptide is Glutamate-1-semialdehyde 2,1-aminomutase (Bordetella parapertussis (strain 12822 / ATCC BAA-587 / NCTC 13253)).